The sequence spans 244 residues: HTH-type transcriptional repressor PhnF (244 aa).

The region spanning 8–74 (RILKHQVVRA…RGRTTVVARP (67 aa)) is the HTH gntR-type domain. The segment at residues 35 to 54 (EREIAEQFEVARETVRQALR) is a DNA-binding region (H-T-H motif).

It is found in the cytoplasm. Functionally, represses the phnDCE operon, involved in the uptake of phosphate, under conditions of phosphate availability in the cell. This chain is HTH-type transcriptional repressor PhnF (phnF), found in Mycolicibacterium smegmatis (strain ATCC 700084 / mc(2)155) (Mycobacterium smegmatis).